A 386-amino-acid chain; its full sequence is Galactokinase (386 aa).

32–35 (EHTD) serves as a coordination point for substrate. ATP contacts are provided by residues Ser-66 and 123–129 (GASLSSS). Ser-129 and Glu-161 together coordinate Mg(2+). Residue Asp-173 is the Proton acceptor of the active site. Tyr-223 contributes to the substrate binding site.

It belongs to the GHMP kinase family. GalK subfamily.

The protein resides in the cytoplasm. It carries out the reaction alpha-D-galactose + ATP = alpha-D-galactose 1-phosphate + ADP + H(+). It participates in carbohydrate metabolism; galactose metabolism. Functionally, catalyzes the transfer of the gamma-phosphate of ATP to D-galactose to form alpha-D-galactose-1-phosphate (Gal-1-P). This is Galactokinase from Staphylococcus saprophyticus subsp. saprophyticus (strain ATCC 15305 / DSM 20229 / NCIMB 8711 / NCTC 7292 / S-41).